Here is a 120-residue protein sequence, read N- to C-terminus: NAD(P)H-quinone oxidoreductase subunit 3 (120 aa).

3 helical membrane-spanning segments follow: residues 1–21 (MFVL…SLVP), 64–84 (MFAL…PWAV), and 89–109 (LGLL…VALV).

It belongs to the complex I subunit 3 family. In terms of assembly, NDH-1 can be composed of about 15 different subunits; different subcomplexes with different compositions have been identified which probably have different functions.

It is found in the cellular thylakoid membrane. It carries out the reaction a plastoquinone + NADH + (n+1) H(+)(in) = a plastoquinol + NAD(+) + n H(+)(out). The catalysed reaction is a plastoquinone + NADPH + (n+1) H(+)(in) = a plastoquinol + NADP(+) + n H(+)(out). In terms of biological role, NDH-1 shuttles electrons from an unknown electron donor, via FMN and iron-sulfur (Fe-S) centers, to quinones in the respiratory and/or the photosynthetic chain. The immediate electron acceptor for the enzyme in this species is believed to be plastoquinone. Couples the redox reaction to proton translocation, and thus conserves the redox energy in a proton gradient. Cyanobacterial NDH-1 also plays a role in inorganic carbon-concentration. The chain is NAD(P)H-quinone oxidoreductase subunit 3 from Trichormus variabilis (strain ATCC 29413 / PCC 7937) (Anabaena variabilis).